We begin with the raw amino-acid sequence, 141 residues long: Putative pre-16S rRNA nuclease (141 aa).

Belongs to the YqgF nuclease family.

Its subcellular location is the cytoplasm. Its function is as follows. Could be a nuclease involved in processing of the 5'-end of pre-16S rRNA. The sequence is that of Putative pre-16S rRNA nuclease from Roseiflexus sp. (strain RS-1).